The primary structure comprises 94 residues: Venom peptide SjAPI (94 aa).

The signal sequence occupies residues 1 to 24 (MKWGALLCIFGFLAFCSVLDRGLG). Residues 25-30 (WIPDIW) constitute a propeptide that is removed on maturation. Intrachain disulfides connect cysteine 33–cysteine 70, cysteine 43–cysteine 66, cysteine 47–cysteine 62, cysteine 51–cysteine 92, and cysteine 72–cysteine 86. In terms of domain architecture, TIL spans 33–92 (CSSKNEEFQQCGSSCPETCANHKNPEPKSCAAVCFVGCVCKPGFIRDDLKGSICVKPEDC). Residues 63–65 (AAV) are protease binding loop.

Belongs to the serine protease inhibitor-like (TIL domain-containing) family. Expressed by the venom gland.

Its subcellular location is the secreted. Recombinant protein inhibits both alpha-chymotrypsin (Ki=97.1 nM) and elastase (Ki=3700 nM). The polypeptide is Venom peptide SjAPI (Scorpiops jendeki (Scorpion)).